A 367-amino-acid chain; its full sequence is Calcium uniporter protein, mitochondrial (367 aa).

Residues 1–12 (MAMPRVLCRVRL) constitute a mitochondrion transit peptide. Residues 13–232 (LIHNDFSVIS…LEEKKLELEQ (220 aa)) lie on the Mitochondrial matrix side of the membrane. Residues 61–80 (KQDASSSSSDSDSSDSDEDD) are disordered. Residues 199 to 233 (REHQLQKEVELTTQLETLQQELLPLEEKKLELEQV) adopt a coiled-coil conformation. The chain crosses the membrane as a helical span at residues 233–253 (VANRRSNWMAWAGLGLMSVQF). The Mitochondrial intermembrane segment spans residues 254-262 (GILARLTWW). Residues 263-284 (EYSWDIMEPVTYFVTYGTAMAA) form a helical membrane-spanning segment. The Selectivity filter motif lies at 266 to 276 (WDIMEPVTYFV). E270 serves as a coordination point for Ca(2+). The Mitochondrial matrix segment spans residues 285–367 (YAYFVLTREE…KKQVEEKAKE (83 aa)).

Belongs to the MCU (TC 1.A.77) family. In terms of assembly, homotetramer. Component of the uniplex complex, composed of MCU, EMRE, MICU1 and MICU2 in a 4:4:1:1 stoichiometry.

The protein resides in the mitochondrion inner membrane. The enzyme catalyses Ca(2+)(in) = Ca(2+)(out). Its activity is regulated as follows. MCU channel activity is regulated by the heterodimer composed of MICU1 and MICU2, which act as calcium-sensors. At low calcium levels, MICU1 occludes the pore of the MCU channel, preventing mitochondrial calcium uptake. At higher calcium levels, calcium-binding to MICU1 and MICU2 induces a conformational change that weakens MCU-MICU1 interactions and moves the MICU1-MICU2 heterodimer away from the pore, allowing calcium permeation through the channel. Channel-forming and calcium-conducting subunit of the mitochondrial inner membrane calcium uniporter complex (uniplex), which mediates calcium uptake into the mitochondrial matrix. MCU channel activity is regulated by the calcium-sensor subunits of the uniplex MICU1 and MICU2. Mitochondrial calcium homeostasis plays key roles in cellular physiology and regulates ATP production, cytoplasmic calcium signals and activation of cell death pathways. This is Calcium uniporter protein, mitochondrial from Tribolium castaneum (Red flour beetle).